Here is a 96-residue protein sequence, read N- to C-terminus: Large ribosomal subunit protein uL23 (96 aa).

It belongs to the universal ribosomal protein uL23 family. In terms of assembly, part of the 50S ribosomal subunit. Contacts protein L29, and trigger factor when it is bound to the ribosome.

One of the early assembly proteins it binds 23S rRNA. One of the proteins that surrounds the polypeptide exit tunnel on the outside of the ribosome. Forms the main docking site for trigger factor binding to the ribosome. This chain is Large ribosomal subunit protein uL23, found in Clostridium novyi (strain NT).